Reading from the N-terminus, the 191-residue chain is MRNVWLIVPFALLAALSGETWAQADRDLYIDSTESSGNYPVDDDDYSSGSGSGIPARGDDEDENVVLTTVQTLISSPSSEMPYVETTTLKTQTKMAPETKEPGEVESTNTVLVYGKKDIVQTATHTENLFHRTEVLAAVIAGGGIGFLFAVFLILLLVYRMRKKDEGSYDLGERKPSSAVYQKAPTKEFYA.

An N-terminal signal peptide occupies residues 1 to 22; the sequence is MRNVWLIVPFALLAALSGETWA. Over 23 to 137 the chain is Extracellular; the sequence is QADRDLYIDS…NLFHRTEVLA (115 aa). The tract at residues 32-60 is disordered; it reads STESSGNYPVDDDDYSSGSGSGIPARGDD. Residues Ser-36, Ser-48, Ser-50, and Ser-52 are each glycosylated (O-linked (Xyl...) (glycosaminoglycan) serine). The chain crosses the membrane as a helical span at residues 138–158; the sequence is AVIAGGGIGFLFAVFLILLLV. Topologically, residues 159 to 191 are cytoplasmic; the sequence is YRMRKKDEGSYDLGERKPSSAVYQKAPTKEFYA. Positions 168–191 are disordered; sequence SYDLGERKPSSAVYQKAPTKEFYA.

The protein belongs to the syndecan proteoglycan family. In terms of processing, O-glycosylated; contains both heparan sulfate and chondroitin sulfate.

It is found in the membrane. Cell surface proteoglycan. This Xenopus laevis (African clawed frog) protein is Syndecan-2-A (sdc2-a).